We begin with the raw amino-acid sequence, 391 residues long: Phosphoglycerate kinase (391 aa).

Residues 21–23, arginine 36, 59–62, arginine 113, and arginine 146 each bind substrate; these read DLN and HLGR. Residues lysine 197, glutamate 319, and 345-348 contribute to the ATP site; that span reads GGDT.

This sequence belongs to the phosphoglycerate kinase family. Monomer.

Its subcellular location is the cytoplasm. It catalyses the reaction (2R)-3-phosphoglycerate + ATP = (2R)-3-phospho-glyceroyl phosphate + ADP. It participates in carbohydrate degradation; glycolysis; pyruvate from D-glyceraldehyde 3-phosphate: step 2/5. The sequence is that of Phosphoglycerate kinase from Xylella fastidiosa (strain 9a5c).